A 75-amino-acid polypeptide reads, in one-letter code: MKKQNLIHAEGLVTESLPNGMFRVLTDNGCQILTHISGRIRRNSVRILPGDRVKVELSAYDLTKGRIIYRLSNKS.

Residues 1–72 (MKKQNLIHAE…TKGRIIYRLS (72 aa)) enclose the S1-like domain.

This sequence belongs to the IF-1 family. In terms of assembly, component of the 30S ribosomal translation pre-initiation complex which assembles on the 30S ribosome in the order IF-2 and IF-3, IF-1 and N-formylmethionyl-tRNA(fMet); mRNA recruitment can occur at any time during PIC assembly.

Its subcellular location is the plastid. It localises to the chloroplast. One of the essential components for the initiation of protein synthesis. Stabilizes the binding of IF-2 and IF-3 on the 30S subunit to which N-formylmethionyl-tRNA(fMet) subsequently binds. Helps modulate mRNA selection, yielding the 30S pre-initiation complex (PIC). Upon addition of the 50S ribosomal subunit IF-1, IF-2 and IF-3 are released leaving the mature 70S translation initiation complex. In Pinus koraiensis (Korean pine), this protein is Translation initiation factor IF-1, chloroplastic.